The chain runs to 162 residues: Glycine cleavage system H protein, mitochondrial (162 aa).

The N-terminal 31 residues, 1–31 (MALRIWASSTANALRLSSATRPHFSPLSRCF), are a transit peptide targeting the mitochondrion. The 83-residue stretch at 53-135 (VATIGITDHA…YEDGWMIKVK (83 aa)) folds into the Lipoyl-binding domain. N6-lipoyllysine is present on Lys94.

It belongs to the GcvH family. As to quaternary structure, the glycine cleavage system is composed of four proteins: P, T, L and H. The cofactor is (R)-lipoate.

Its subcellular location is the mitochondrion. Its function is as follows. The glycine cleavage system catalyzes the degradation of glycine. The H protein shuttles the methylamine group of glycine from the P protein to the T protein. The protein is Glycine cleavage system H protein, mitochondrial (GDCSH) of Flaveria pringlei.